A 465-amino-acid polypeptide reads, in one-letter code: Glutamyl-tRNA reductase 2 (465 aa).

Substrate is bound by residues 62–65, Ser122, 127–129, and Gln133; these read TCNR and EGQ. Cys63 serves as the catalytic Nucleophile. Residue 204–209 participates in NADP(+) binding; it reads GAGKMG.

It belongs to the glutamyl-tRNA reductase family.

It is found in the plastid. The protein localises to the chloroplast. It carries out the reaction (S)-4-amino-5-oxopentanoate + tRNA(Glu) + NADP(+) = L-glutamyl-tRNA(Glu) + NADPH + H(+). It functions in the pathway porphyrin-containing compound metabolism; protoporphyrin-IX biosynthesis; 5-aminolevulinate from L-glutamyl-tRNA(Glu): step 1/2. Functionally, catalyzes the NADPH-dependent reduction of glutamyl-tRNA(Glu) to glutamate 1-semialdehyde (GSA). The protein is Glutamyl-tRNA reductase 2 (HEMA2) of Hordeum vulgare (Barley).